Here is a 455-residue protein sequence, read N- to C-terminus: Membrane protein Pbs54 (455 aa).

A helical membrane pass occupies residues 12-32 (IISIIILILRISLFSCAEHLF). Residues asparagine 41, asparagine 102, and asparagine 125 are each glycosylated (N-linked (GlcNAc...) asparagine). 6 helical membrane passes run 181–201 (IFLI…LFNG), 220–240 (FIFF…LSCI), 244–264 (ILTF…FYLF), 285–305 (ILIG…IIFI), 312–332 (FLVK…IFFL), and 346–366 (FVFS…FWNI). Asparagine 373 is a glycosylation site (N-linked (GlcNAc...) asparagine). Residues 398-418 (NMFALFMIFAMSILSIIFPRI) traverse the membrane as a helical segment.

It localises to the cell projection. The protein localises to the cilium. The protein resides in the flagellum. It is found in the cell membrane. Its function is as follows. Plays a role in gamete fertilization. Required for the successful transmission of parasites to mosquito. The chain is Membrane protein Pbs54 from Plasmodium berghei (strain Anka).